The sequence spans 923 residues: Alanine--tRNA ligase (923 aa).

Zn(2+) is bound by residues His611, His615, Cys714, and His718. Residues 886-903 (VGGGGGGRPNMARGGGTD) are compositionally biased toward gly residues. A disordered region spans residues 886–909 (VGGGGGGRPNMARGGGTDPSGMDN).

It belongs to the class-II aminoacyl-tRNA synthetase family. Zn(2+) serves as cofactor.

Its subcellular location is the cytoplasm. It carries out the reaction tRNA(Ala) + L-alanine + ATP = L-alanyl-tRNA(Ala) + AMP + diphosphate. Catalyzes the attachment of alanine to tRNA(Ala) in a two-step reaction: alanine is first activated by ATP to form Ala-AMP and then transferred to the acceptor end of tRNA(Ala). Also edits incorrectly charged Ser-tRNA(Ala) and Gly-tRNA(Ala) via its editing domain. This is Alanine--tRNA ligase from Methanococcoides burtonii (strain DSM 6242 / NBRC 107633 / OCM 468 / ACE-M).